Reading from the N-terminus, the 369-residue chain is Homoserine O-acetyltransferase (369 aa).

In terms of domain architecture, AB hydrolase-1 spans 44 to 350 (NAILVAHAWT…AYGHDAFLLE (307 aa)). S150 (nucleophile) is an active-site residue. R217 contributes to the substrate binding site. Active-site residues include D311 and H344. Position 345 (D345) interacts with substrate.

It belongs to the AB hydrolase superfamily. MetX family. In terms of assembly, homodimer.

It is found in the cytoplasm. It carries out the reaction L-homoserine + acetyl-CoA = O-acetyl-L-homoserine + CoA. It functions in the pathway amino-acid biosynthesis; L-methionine biosynthesis via de novo pathway; O-acetyl-L-homoserine from L-homoserine: step 1/1. Functionally, transfers an acetyl group from acetyl-CoA to L-homoserine, forming acetyl-L-homoserine. The chain is Homoserine O-acetyltransferase from Geobacter metallireducens (strain ATCC 53774 / DSM 7210 / GS-15).